Here is a 156-residue protein sequence, read N- to C-terminus: Small ribosomal subunit protein uS7 (156 aa).

This sequence belongs to the universal ribosomal protein uS7 family. As to quaternary structure, part of the 30S ribosomal subunit. Contacts proteins S9 and S11.

One of the primary rRNA binding proteins, it binds directly to 16S rRNA where it nucleates assembly of the head domain of the 30S subunit. Is located at the subunit interface close to the decoding center, probably blocks exit of the E-site tRNA. In Ruegeria pomeroyi (strain ATCC 700808 / DSM 15171 / DSS-3) (Silicibacter pomeroyi), this protein is Small ribosomal subunit protein uS7.